We begin with the raw amino-acid sequence, 286 residues long: Transcription factor MafA (286 aa).

Phosphoserine occurs at positions 14 and 49. Over residues 51-85 (SSTPLSTPCSSVPSSPSFCAPSPGGQPSAGPTAAP) the composition is skewed to low complexity. The interval 51–87 (SSTPLSTPCSSVPSSPSFCAPSPGGQPSAGPTAAPLG) is disordered. Phosphothreonine occurs at positions 53 and 57. A phosphoserine mark is found at Ser61 and Ser65. Thr113 bears the Phosphothreonine mark. The disordered stretch occupies residues 126-167 (HHHHHHHQSYESFRPQPFGGEELPPAAHHHNAHHHHHHHHLR). Over residues 152–166 (AHHHNAHHHHHHHHL) the composition is skewed to basic residues. Residues 199–224 (RLKQNRRTLKNRGYAQSCRYKRVQQR) form a basic motif region. The 64-residue stretch at 199–262 (RLKQNRRTLK…DLYKEKYEKL (64 aa)) folds into the bZIP domain. The leucine-zipper stretch occupies residues 227 to 248 (LENEKCQLQSQVEQLKQEVSRL). The interval 265–286 (RGFPREPSPPAAPKTTAADFFM) is disordered. Residue Ser272 is modified to Phosphoserine. Residues 277 to 286 (PKTTAADFFM) show a composition bias toward low complexity.

The protein belongs to the bZIP family. Maf subfamily. In terms of assembly, forms homodimers or heterodimers. May interact (via leucine-zipper domain) with MAFB. May interact with FOS and JUN. Interacts with PCAF; this interaction impairs MAFA ubiquitination.

The protein resides in the nucleus. Its function is as follows. Transcription factor involved in transcription regulation during lens development, including that of crystallin and filensin/BFSP1 genes. Binds to CRE-type MARE 5'-TGCTGACGTCAGCA-3' and TRE-type MARE 5'-TGCTGACTCAGCA-3' DNA sequences. The protein is Transcription factor MafA (MAFA) of Gallus gallus (Chicken).